Consider the following 255-residue polypeptide: Coniferyl-alcohol dehydrogenase (255 aa).

NAD(+) is bound by residues 12–17 (GVSSGI), D36, 51–52 (DL), and G77. S117 provides a ligand contact to substrate. NAD(+)-binding residues include Y157 and K161. Catalysis depends on Y157, which acts as the Proton acceptor.

It belongs to the short-chain dehydrogenases/reductases (SDR) family.

It catalyses the reaction (E)-coniferol + NADP(+) = (E)-coniferaldehyde + NADPH + H(+). Its function is as follows. Catalyzes the conversion of coniferyl alcohol into coniferyl aldehyde in the eugenol degradation pathway. Specific for coniferyl alcohol; does not act on cinnamyl alcohol, 4-coumaryl alcohol or sinapyl alcohol. This Pseudomonas sp. (strain HR199 / DSM 7063) protein is Coniferyl-alcohol dehydrogenase (calA).